The following is a 310-amino-acid chain: D-alanyl-D-alanine endopeptidase (310 aa).

A signal peptide spans 1–25 (MPKFRVSLFSLALMLAVPFAPQAVA). S67 (acyl-ester intermediate) is an active-site residue. The active-site Proton acceptor is K70. S124 is an active-site residue. Substrate is bound at residue K231.

It belongs to the peptidase S11 family. In terms of processing, pbp8 is a proteolytic product of Pbp7.

The protein localises to the periplasm. Functionally, cell wall formation. May play a specialized role in remodeling the cell wall. Specifically hydrolyzes the DD-diaminopimelate-alanine bonds in high-molecular-mass murein sacculi. The protein is D-alanyl-D-alanine endopeptidase (pbpG) of Escherichia coli (strain K12).